The following is a 208-amino-acid chain: Urease accessory protein UreG 2 (208 aa).

16–23 provides a ligand contact to GTP; that stretch reads GPVGSGKT.

This sequence belongs to the SIMIBI class G3E GTPase family. UreG subfamily. Homodimer. UreD, UreF and UreG form a complex that acts as a GTP-hydrolysis-dependent molecular chaperone, activating the urease apoprotein by helping to assemble the nickel containing metallocenter of UreC. The UreE protein probably delivers the nickel.

The protein resides in the cytoplasm. Functionally, facilitates the functional incorporation of the urease nickel metallocenter. This process requires GTP hydrolysis, probably effectuated by UreG. The polypeptide is Urease accessory protein UreG 2 (Methylobacterium radiotolerans (strain ATCC 27329 / DSM 1819 / JCM 2831 / NBRC 15690 / NCIMB 10815 / 0-1)).